The sequence spans 451 residues: UPF0761 membrane protein Hhal_0704 (451 aa).

The next 6 membrane-spanning stretches (helical) occupy residues 66–86 (LLAI…FPVF), 122–142 (ELTA…LNTI), 162–182 (FMVY…SVAS), 204–224 (LLNL…YSLV), 228–248 (SVPV…FELA), and 268–288 (ALAA…VILI).

The protein belongs to the UPF0761 family.

It is found in the cell inner membrane. This chain is UPF0761 membrane protein Hhal_0704, found in Halorhodospira halophila (strain DSM 244 / SL1) (Ectothiorhodospira halophila (strain DSM 244 / SL1)).